We begin with the raw amino-acid sequence, 1017 residues long: Ubiquitin-like modifier-activating enzyme 1 (1017 aa).

2 tandem repeats follow at residues 26–163 (SHET…GQLF) and 419–571 (GKTL…QVVV). The interval 26–571 (SHETMKKITS…GTKGNTQVVV (546 aa)) is 2 approximate repeats. ATP-binding positions include Ala-438, Asp-464, Arg-475, Lys-488, and 536 to 537 (DN). Cys-592 acts as the Glycyl thioester intermediate in catalysis. Positions 765-781 (IQTSENEPAPSSNTQQA) are enriched in polar residues. Residues 765 to 788 (IQTSENEPAPSSNTQQAGGDAEDD) form a disordered region.

It belongs to the ubiquitin-activating E1 family. In terms of assembly, monomer.

It carries out the reaction ATP + ubiquitin + [E1 ubiquitin-activating enzyme]-L-cysteine = AMP + diphosphate + S-ubiquitinyl-[E1 ubiquitin-activating enzyme]-L-cysteine.. It functions in the pathway protein modification; protein ubiquitination. Its function is as follows. Catalyzes the first step in ubiquitin conjugation to mark cellular proteins for degradation through the ubiquitin-proteasome system. Activates ubiquitin by first adenylating its C-terminal glycine residue with ATP, and thereafter linking this residue to the side chain of a cysteine residue in E1, yielding a ubiquitin-E1 thioester and free AMP. This Dictyostelium discoideum (Social amoeba) protein is Ubiquitin-like modifier-activating enzyme 1 (uba1).